A 149-amino-acid polypeptide reads, in one-letter code: Arginine repressor (149 aa).

It belongs to the ArgR family.

The protein resides in the cytoplasm. It participates in amino-acid biosynthesis; L-arginine biosynthesis [regulation]. In terms of biological role, regulates arginine biosynthesis genes. The sequence is that of Arginine repressor from Geobacillus thermodenitrificans (strain NG80-2).